A 465-amino-acid polypeptide reads, in one-letter code: tRNA (guanine(37)-N(1))-methyltransferase (465 aa).

The transit peptide at 1–20 (MDKNSQLRDMNLFRAPAARA) directs the protein to the mitochondrion. S-adenosyl-L-methionine-binding positions include H238 and 304–305 (DG). The interval 326 to 345 (AVIKPPRPPRKSAAPPPEPV) is disordered. N359 lines the S-adenosyl-L-methionine pocket.

This sequence belongs to the class I-like SAM-binding methyltransferase superfamily. TRM5/TYW2 family. Monomer.

The protein resides in the mitochondrion matrix. It is found in the nucleus. The protein localises to the cytoplasm. It catalyses the reaction guanosine(37) in tRNA + S-adenosyl-L-methionine = N(1)-methylguanosine(37) in tRNA + S-adenosyl-L-homocysteine + H(+). In terms of biological role, specifically methylates the N1 position of guanosine-37 in various cytoplasmic and mitochondrial tRNAs. Methylation is not dependent on the nature of the nucleoside 5' of the target nucleoside. This is the first step in the biosynthesis of wybutosine (yW), a modified base adjacent to the anticodon of tRNAs and required for accurate decoding. This Fusarium vanettenii (strain ATCC MYA-4622 / CBS 123669 / FGSC 9596 / NRRL 45880 / 77-13-4) (Fusarium solani subsp. pisi) protein is tRNA (guanine(37)-N(1))-methyltransferase.